The following is a 448-amino-acid chain: Asparagine--tRNA ligase (448 aa).

The protein belongs to the class-II aminoacyl-tRNA synthetase family. In terms of assembly, homodimer.

It localises to the cytoplasm. The catalysed reaction is tRNA(Asn) + L-asparagine + ATP = L-asparaginyl-tRNA(Asn) + AMP + diphosphate + H(+). The chain is Asparagine--tRNA ligase from Streptococcus suis (strain 98HAH33).